A 314-amino-acid polypeptide reads, in one-letter code: Homoserine O-acetyltransferase (314 aa).

C142 acts as the Acyl-thioester intermediate in catalysis. Substrate contacts are provided by K163 and S192. The active-site Proton acceptor is H235. The active site involves E237. Residue R249 coordinates substrate.

This sequence belongs to the MetA family.

The protein localises to the cytoplasm. The catalysed reaction is L-homoserine + acetyl-CoA = O-acetyl-L-homoserine + CoA. The protein operates within amino-acid biosynthesis; L-methionine biosynthesis via de novo pathway; O-acetyl-L-homoserine from L-homoserine: step 1/1. In terms of biological role, transfers an acetyl group from acetyl-CoA to L-homoserine, forming acetyl-L-homoserine. The polypeptide is Homoserine O-acetyltransferase (Desulfovibrio desulfuricans (strain ATCC 27774 / DSM 6949 / MB)).